Consider the following 367-residue polypeptide: Dihydroxyacetone phosphate transaminase Cj1437c (367 aa).

K219 bears the N6-(pyridoxal phosphate)lysine mark.

It belongs to the class-II pyridoxal-phosphate-dependent aminotransferase family. Requires pyridoxal 5'-phosphate as cofactor.

The enzyme catalyses dihydroxyacetone phosphate + L-glutamate = (S)-serinol phosphate + 2-oxoglutarate. It participates in capsule biogenesis; capsule polysaccharide biosynthesis. Pyridoxal phosphate (PLP)-dependent transaminase involved in the biosynthesis of amidated D-glucuronic acid structures found on the capsular polysaccharide (CPS) of C.jejuni. Catalyzes the transamination of dihydroxyacetone phosphate (DHAP) to (S)-serinol phosphate in the presence of L-glutamate. Less active with L-aspartate. No activity with dihydroxyacetone or L-alanine. The protein is Dihydroxyacetone phosphate transaminase Cj1437c of Campylobacter jejuni subsp. jejuni serotype O:2 (strain ATCC 700819 / NCTC 11168).